We begin with the raw amino-acid sequence, 99 residues long: MANVQYYDVILKPVVTEKSMNAMAEKKYTFLVHPDANKTMIKEAVERMFEGTKVAKVNTMNCEGKNKRRGMVTGKTAKTKKAIVQLTADSKDIEIFAGL.

The protein belongs to the universal ribosomal protein uL23 family. As to quaternary structure, part of the 50S ribosomal subunit. Contacts protein L29, and trigger factor when it is bound to the ribosome.

Its function is as follows. One of the early assembly proteins it binds 23S rRNA. One of the proteins that surrounds the polypeptide exit tunnel on the outside of the ribosome. Forms the main docking site for trigger factor binding to the ribosome. The chain is Large ribosomal subunit protein uL23 from Agathobacter rectalis (strain ATCC 33656 / DSM 3377 / JCM 17463 / KCTC 5835 / VPI 0990) (Eubacterium rectale).